A 321-amino-acid chain; its full sequence is Lipoyl synthase (321 aa).

7 residues coordinate [4Fe-4S] cluster: Cys68, Cys73, Cys79, Cys94, Cys98, Cys101, and Ser308. The Radical SAM core domain occupies 80–297 (FNHGTATFMI…KELAESIGFT (218 aa)).

It belongs to the radical SAM superfamily. Lipoyl synthase family. Requires [4Fe-4S] cluster as cofactor.

The protein localises to the cytoplasm. The enzyme catalyses [[Fe-S] cluster scaffold protein carrying a second [4Fe-4S](2+) cluster] + N(6)-octanoyl-L-lysyl-[protein] + 2 oxidized [2Fe-2S]-[ferredoxin] + 2 S-adenosyl-L-methionine + 4 H(+) = [[Fe-S] cluster scaffold protein] + N(6)-[(R)-dihydrolipoyl]-L-lysyl-[protein] + 4 Fe(3+) + 2 hydrogen sulfide + 2 5'-deoxyadenosine + 2 L-methionine + 2 reduced [2Fe-2S]-[ferredoxin]. It participates in protein modification; protein lipoylation via endogenous pathway; protein N(6)-(lipoyl)lysine from octanoyl-[acyl-carrier-protein]: step 2/2. Catalyzes the radical-mediated insertion of two sulfur atoms into the C-6 and C-8 positions of the octanoyl moiety bound to the lipoyl domains of lipoate-dependent enzymes, thereby converting the octanoylated domains into lipoylated derivatives. In Shewanella pealeana (strain ATCC 700345 / ANG-SQ1), this protein is Lipoyl synthase.